The primary structure comprises 503 residues: ATP synthase subunit alpha (503 aa).

Residue 169 to 176 (GDRSTGKT) participates in ATP binding.

It belongs to the ATPase alpha/beta chains family. In terms of assembly, F-type ATPases have 2 components, CF(1) - the catalytic core - and CF(0) - the membrane proton channel. CF(1) has five subunits: alpha(3), beta(3), gamma(1), delta(1), epsilon(1). CF(0) has three main subunits: a(1), b(2) and c(9-12). The alpha and beta chains form an alternating ring which encloses part of the gamma chain. CF(1) is attached to CF(0) by a central stalk formed by the gamma and epsilon chains, while a peripheral stalk is formed by the delta and b chains.

It localises to the cell membrane. The enzyme catalyses ATP + H2O + 4 H(+)(in) = ADP + phosphate + 5 H(+)(out). Its function is as follows. Produces ATP from ADP in the presence of a proton gradient across the membrane. The alpha chain is a regulatory subunit. In Dehalococcoides mccartyi (strain ATCC BAA-2100 / JCM 16839 / KCTC 5957 / BAV1), this protein is ATP synthase subunit alpha.